Reading from the N-terminus, the 330-residue chain is tRNA U34 carboxymethyltransferase (330 aa).

Carboxy-S-adenosyl-L-methionine contacts are provided by residues K91, W105, K110, G130, 152 to 154, 181 to 182, M196, Y200, and R315; these read DPS and IE.

It belongs to the class I-like SAM-binding methyltransferase superfamily. CmoB family. Homotetramer.

It carries out the reaction carboxy-S-adenosyl-L-methionine + 5-hydroxyuridine(34) in tRNA = 5-carboxymethoxyuridine(34) in tRNA + S-adenosyl-L-homocysteine + H(+). Catalyzes carboxymethyl transfer from carboxy-S-adenosyl-L-methionine (Cx-SAM) to 5-hydroxyuridine (ho5U) to form 5-carboxymethoxyuridine (cmo5U) at position 34 in tRNAs. The polypeptide is tRNA U34 carboxymethyltransferase (Shewanella pealeana (strain ATCC 700345 / ANG-SQ1)).